Here is a 100-residue protein sequence, read N- to C-terminus: Large ribosomal subunit protein bL21 (100 aa).

It belongs to the bacterial ribosomal protein bL21 family. As to quaternary structure, part of the 50S ribosomal subunit. Contacts protein L20.

Functionally, this protein binds to 23S rRNA in the presence of protein L20. This chain is Large ribosomal subunit protein bL21, found in Deinococcus deserti (strain DSM 17065 / CIP 109153 / LMG 22923 / VCD115).